We begin with the raw amino-acid sequence, 209 residues long: Orotate phosphoribosyltransferase (209 aa).

Residues R96, K100, H102, and 122–130 each bind 5-phospho-alpha-D-ribose 1-diphosphate; that span reads EDLISTGGS. Residue S126 participates in orotate binding.

It belongs to the purine/pyrimidine phosphoribosyltransferase family. PyrE subfamily. As to quaternary structure, homodimer. It depends on Mg(2+) as a cofactor.

It carries out the reaction orotidine 5'-phosphate + diphosphate = orotate + 5-phospho-alpha-D-ribose 1-diphosphate. Its pathway is pyrimidine metabolism; UMP biosynthesis via de novo pathway; UMP from orotate: step 1/2. Functionally, catalyzes the transfer of a ribosyl phosphate group from 5-phosphoribose 1-diphosphate to orotate, leading to the formation of orotidine monophosphate (OMP). The sequence is that of Orotate phosphoribosyltransferase from Lactococcus lactis subsp. lactis (strain IL1403) (Streptococcus lactis).